Consider the following 503-residue polypeptide: MSTLEDGFPADKLFAQGYSYTYDDVIFLPHFIDFSTDAVSLSTRLSRRVPLSIPCVSSPMDTVSESHMAAAMASLGGIGIVHYNCGIAAQASIIRQAKSLKHPIASDAGVKFPEYEITSLDAFGPSSFVFVEQTGTMTTPKLLGYVTKSQWKRMNYEQREMKIYDYMKSCDSSDYCVPWEIDFEKLEFVLEDKQKGFVVLERDGETVNVVTKDDIQRVKGYPKSGPGTVGPDGEWMVGAAIGTRESDKERLEHLVNVGVNAVVLDSSQGNSIYQLEMIKYVKKTYPELDVIGGNVVTMYQAQNLIQAGVDGLRVGMGSGSICTTQEVCAVGRGQATAVYKVCSIAAQSGIPVIADGGISNSGHIVKALVLGASTVMMGSFLAGSTEAPGGYEYTNGKRIKKYRGMGSLEAMTKGSDQRYLGDQTKLKIAQGVVGAVADKGSVLKLIPYTMHAVKQGFQDLGASSLQSAHGLLRSNILRLEARTGAAQVEGGVHGLVSYEKKSF.

S2 bears the N-acetylserine mark. The CBS domain occupies 167–225; that stretch reads MKSCDSSDYCVPWEIDFEKLEFVLEDKQKGFVVLERDGETVNVVTKDDIQRVKGYPKSG. Residues 265–267 and 315–317 each bind NAD(+); these read DSS and GMG. Residues G317 and G319 each coordinate K(+). S320 is a binding site for IMP. Residue C322 participates in K(+) binding. C322 functions as the Thioimidate intermediate in the catalytic mechanism. IMP is bound by residues 355-357, 378-379, and 402-406; these read DGG, GS, and YRGMG. Residue R418 is the Proton acceptor of the active site. Q430 contributes to the IMP binding site. Residues E489, G490, and G491 each coordinate K(+).

This sequence belongs to the IMPDH/GMPR family. In terms of assembly, homotetramer. The cofactor is K(+).

Its subcellular location is the cytoplasm. It carries out the reaction IMP + NAD(+) + H2O = XMP + NADH + H(+). It participates in purine metabolism; XMP biosynthesis via de novo pathway; XMP from IMP: step 1/1. With respect to regulation, mycophenolic acid (MPA) is a non-competitive inhibitor that prevents formation of the closed enzyme conformation by binding to the same site as the amobile flap. In contrast, mizoribine monophosphate (MZP) is a competitive inhibitor that induces the closed conformation. MPA is a potent inhibitor of mammalian IMPDHs but a poor inhibitor of the bacterial enzymes. MZP is a more potent inhibitor of bacterial IMPDH. Its function is as follows. Catalyzes the conversion of inosine 5'-phosphate (IMP) to xanthosine 5'-phosphate (XMP), the first committed and rate-limiting step in the de novo synthesis of guanine nucleotides, and therefore plays an important role in the regulation of cell growth. The polypeptide is Inosine-5'-monophosphate dehydrogenase 1 (Arabidopsis thaliana (Mouse-ear cress)).